Consider the following 122-residue polypeptide: Large ribosomal subunit protein uL18 (122 aa).

It belongs to the universal ribosomal protein uL18 family. As to quaternary structure, part of the 50S ribosomal subunit; part of the 5S rRNA/L5/L18/L25 subcomplex. Contacts the 5S and 23S rRNAs.

Its function is as follows. This is one of the proteins that bind and probably mediate the attachment of the 5S RNA into the large ribosomal subunit, where it forms part of the central protuberance. This chain is Large ribosomal subunit protein uL18, found in Heliobacterium modesticaldum (strain ATCC 51547 / Ice1).